We begin with the raw amino-acid sequence, 90 residues long: DNA-binding protein HU-alpha (90 aa).

This sequence belongs to the bacterial histone-like protein family. Heterodimer of an alpha and a beta chain.

Histone-like DNA-binding protein which is capable of wrapping DNA to stabilize it, and thus to prevent its denaturation under extreme environmental conditions. This chain is DNA-binding protein HU-alpha (hupA), found in Vibrio proteolyticus (Aeromonas proteolytica).